A 616-amino-acid chain; its full sequence is Protein decapentaplegic (616 aa).

An N-terminal signal peptide occupies residues 1 to 23; that stretch reads MRAWILLLAVLATSQPIVQVAST. A propeptide spanning residues 24–474 is cleaved from the precursor; that stretch reads EDTSISQRFI…DGRHKARSIR (451 aa). The interval 80–188 is disordered; that stretch reads SDSDSDNNNN…TSTESHQSPI (109 aa). The span at 86 to 105 shows a compositional bias: low complexity; that stretch reads NNNNNYKNRNNNNNNLNKGP. The segment covering 106–115 has biased composition (basic residues); the sequence is RNNKNKGNKH. Basic and acidic residues predominate over residues 116–139; that stretch reads SKSDANRQFNEVHKPRTDQLENSK. Asn-147 carries N-linked (GlcNAc...) asparagine glycosylation. The span at 173 to 188 shows a compositional bias: polar residues; it reads ATTTALTSTESHQSPI. Residues Asn-360 and Asn-395 are each glycosylated (N-linked (GlcNAc...) asparagine). The disordered stretch occupies residues 470–512; that stretch reads ARSIRDVSGGGGGGGGAGEGGKGNGGGRNRRHQRRPARRKNHE. Residues 477-496 show a composition bias toward gly residues; that stretch reads SGGGGGGGGAGEGGKGNGGG. Residues 497 to 509 are compositionally biased toward basic residues; the sequence is RNRRHQRRPARRK. 3 disulfide bridges follow: Cys-515-Cys-581, Cys-544-Cys-613, and Cys-548-Cys-615. Asn-557 is a glycosylation site (N-linked (GlcNAc...) asparagine).

The protein belongs to the TGF-beta family. In terms of assembly, heterodimers of scw/dpp are the active subunit, dpp/dpp homodimers elicit a basal response and scw/scw homodimers alone are ineffective in specifying a dorsal pattern. Expressed in the imaginal discs associated with establishment of the proximal-distal axis of the appendages, and midgut mesoderm.

Its subcellular location is the secreted. Acts as an extracellular morphogen to establish at least two cellular response thresholds within the dorsal half of the drosophila embryo. Required for the proper development of the embryonic dorsal hypoderm, for viability of larvae and for cell viability of the epithelial cells in the imaginal disks. Acts together with scw. The polypeptide is Protein decapentaplegic (dpp) (Drosophila pseudoobscura pseudoobscura (Fruit fly)).